We begin with the raw amino-acid sequence, 278 residues long: uncharacterized protein (278 aa).

A compositionally biased stretch (basic and acidic residues) spans Met-1–Ser-16. Disordered regions lie at residues Met-1–Asn-86 and Phe-98–Leu-126. Composition is skewed to low complexity over residues Gln-33–Ser-45 and Gly-99–Ser-117.

The protein belongs to the adhesin P1 family.

This is an uncharacterized protein from Mycoplasma pneumoniae (strain ATCC 29342 / M129 / Subtype 1) (Mycoplasmoides pneumoniae).